The primary structure comprises 753 residues: Pesticidal crystal protein Cry20Aa (753 aa).

Residues D680–G696 are compositionally biased toward polar residues. The segment at D680–N721 is disordered. The segment covering Q712–N721 has biased composition (low complexity).

The protein belongs to the delta endotoxin family. Has low mosquitocidal activity probably due to rapid proteolysis to inactive 56 kDa and 43 kDa proteins.

Its function is as follows. Promotes colloidosmotic lysis by binding to the midgut epithelial cells of mosquitos. Active against Aedes aegypti and Culex quinquefasciatus larvae. In Bacillus thuringiensis subsp. fukuokaensis, this protein is Pesticidal crystal protein Cry20Aa (cry20Aa).